Reading from the N-terminus, the 477-residue chain is Stromelysin-1 (477 aa).

The N-terminal stretch at 1–17 is a signal peptide; the sequence is MKNLPILLLLCVAACSA. The propeptide at 18–99 is activation peptide; sequence YPLDRSARDE…SRCGVPDVGH (82 aa). The Cysteine switch signature appears at 90 to 97; that stretch reads SRCGVPDV. Cysteine 92 contacts Zn(2+). Asparagine 120 carries N-linked (GlcNAc...) asparagine glycosylation. Residues aspartate 124 and aspartate 158 each contribute to the Ca(2+) site. Residues histidine 168 and aspartate 170 each contribute to the Zn(2+) site. Ca(2+)-binding residues include aspartate 175, glycine 176, glycine 178, and valine 180. Histidine 183 serves as a coordination point for Zn(2+). Residues glycine 190, asparagine 192, and aspartate 194 each coordinate Ca(2+). Histidine 196 contacts Zn(2+). Residues aspartate 198, aspartate 199, and glutamate 201 each coordinate Ca(2+). Residue histidine 218 participates in Zn(2+) binding. Residue glutamate 219 is part of the active site. Residues histidine 222 and histidine 228 each contribute to the Zn(2+) site. Residues 260 to 285 are disordered; the sequence is QSLYGPPPASPDSPVEPSEPEPPAPG. 4 Hemopexin repeats span residues 287–336, 337–383, 385–433, and 434–477; these read LAMC…WPSL, PSGI…GFPP, VRKI…FPGI, and DSKL…WFNC. Cysteine 290 and cysteine 477 are disulfide-bonded. A Ca(2+)-binding site is contributed by aspartate 297. Residues aspartate 389 and aspartate 438 each contribute to the Ca(2+) site.

Belongs to the peptidase M10A family. It depends on Ca(2+) as a cofactor. Zn(2+) serves as cofactor.

It is found in the secreted. The protein localises to the extracellular space. The protein resides in the extracellular matrix. The enzyme catalyses Preferential cleavage where P1', P2' and P3' are hydrophobic residues.. In terms of biological role, metalloproteinase with a rather broad substrate specificity that can degrade fibronectin, laminin, gelatins of type I, III, IV, and V; collagens III, IV, X, and IX, and cartilage proteoglycans. Activates different molecules including growth factors, plasminogen or other matrix metalloproteinases such as MMP9. Once released into the extracellular matrix (ECM), the inactive pro-enzyme is activated by the plasmin cascade signaling pathway. Also acts intracellularly. For example, in dopaminergic neurons, gets activated by the serine protease HTRA2 upon stress and plays a pivotal role in DA neuronal degeneration by mediating microglial activation and alpha-synuclein/SNCA cleavage. In addition, plays a role in immune response and possesses antiviral activity against various viruses. Mechanistically, translocates from the cytoplasm into the cell nucleus upon virus infection to influence NF-kappa-B activities. This chain is Stromelysin-1 (MMP3), found in Equus caballus (Horse).